We begin with the raw amino-acid sequence, 477 residues long: Ubiquitin carboxyl-terminal hydrolase 7 (477 aa).

In terms of domain architecture, Ubiquitin-like spans 2-77 (LTVSVKWQKK…LMMMGTADEI (76 aa)). Positions 104 to 473 (AGLVNLGNTC…MAYIVMYKAR (370 aa)) constitute a USP domain. Cys113 functions as the Nucleophile in the catalytic mechanism. Residues 171-190 (MPFWMVLQKKYPQFAQLHNG) form a calmodulin-binding region. A disordered region spans residues 364–401 (QASAKSSSKGDDVKMTDAEGSSNQSGESSTGDQQEGAS). The segment covering 371 to 380 (SKGDDVKMTD) has biased composition (basic and acidic residues). Positions 382–399 (EGSSNQSGESSTGDQQEG) are enriched in polar residues. Residue His425 is the Proton acceptor of the active site.

The protein belongs to the peptidase C19 family. As to quaternary structure, interacts with calmodulin (CaM).

It carries out the reaction Thiol-dependent hydrolysis of ester, thioester, amide, peptide and isopeptide bonds formed by the C-terminal Gly of ubiquitin (a 76-residue protein attached to proteins as an intracellular targeting signal).. In terms of biological role, recognizes and hydrolyzes the peptide bond at the C-terminal Gly of ubiquitin. Involved in the processing of poly-ubiquitin precursors as well as that of ubiquitinated proteins. This chain is Ubiquitin carboxyl-terminal hydrolase 7 (UBP7), found in Arabidopsis thaliana (Mouse-ear cress).